A 191-amino-acid chain; its full sequence is Fe/S biogenesis protein NfuA (191 aa).

[4Fe-4S] cluster-binding residues include cysteine 149 and cysteine 152.

This sequence belongs to the NfuA family. As to quaternary structure, homodimer. [4Fe-4S] cluster is required as a cofactor.

Its function is as follows. Involved in iron-sulfur cluster biogenesis. Binds a 4Fe-4S cluster, can transfer this cluster to apoproteins, and thereby intervenes in the maturation of Fe/S proteins. Could also act as a scaffold/chaperone for damaged Fe/S proteins. This is Fe/S biogenesis protein NfuA from Hamiltonella defensa subsp. Acyrthosiphon pisum (strain 5AT).